We begin with the raw amino-acid sequence, 343 residues long: Dihydroorotase (343 aa).

Zn(2+) is bound by residues His-13 and His-15. Substrate contacts are provided by residues 15–17 and Asn-41; that span reads HLR. 3 residues coordinate Zn(2+): Lys-99, His-136, and His-174. Lys-99 is subject to N6-carboxylysine. His-136 provides a ligand contact to substrate. Leu-219 contacts substrate. A Zn(2+)-binding site is contributed by Asp-247. The active site involves Asp-247. Substrate is bound by residues His-251 and Ala-263.

It belongs to the metallo-dependent hydrolases superfamily. DHOase family. Class II DHOase subfamily. As to quaternary structure, homodimer. Zn(2+) is required as a cofactor.

It catalyses the reaction (S)-dihydroorotate + H2O = N-carbamoyl-L-aspartate + H(+). It functions in the pathway pyrimidine metabolism; UMP biosynthesis via de novo pathway; (S)-dihydroorotate from bicarbonate: step 3/3. Catalyzes the reversible cyclization of carbamoyl aspartate to dihydroorotate. The chain is Dihydroorotase from Shewanella oneidensis (strain ATCC 700550 / JCM 31522 / CIP 106686 / LMG 19005 / NCIMB 14063 / MR-1).